The sequence spans 294 residues: UPF0761 membrane protein YPTB0027 (294 aa).

7 consecutive transmembrane segments (helical) span residues 44–64, 67–87, 108–128, 136–156, 185–205, 212–232, and 246–266; these read LLSL…FPMF, ISIK…GDII, GLIV…NIIW, LVFS…LVGA, VFPL…VPTV, ALIG…GFAM, and VLAV…IVLL.

Belongs to the UPF0761 family.

The protein localises to the cell inner membrane. This chain is UPF0761 membrane protein YPTB0027, found in Yersinia pseudotuberculosis serotype I (strain IP32953).